The sequence spans 246 residues: 1-(5-phosphoribosyl)-5-[(5-phosphoribosylamino)methylideneamino] imidazole-4-carboxamide isomerase (246 aa).

Catalysis depends on aspartate 8, which acts as the Proton acceptor. The active-site Proton donor is aspartate 131.

The protein belongs to the HisA/HisF family.

The protein localises to the cytoplasm. It catalyses the reaction 1-(5-phospho-beta-D-ribosyl)-5-[(5-phospho-beta-D-ribosylamino)methylideneamino]imidazole-4-carboxamide = 5-[(5-phospho-1-deoxy-D-ribulos-1-ylimino)methylamino]-1-(5-phospho-beta-D-ribosyl)imidazole-4-carboxamide. It functions in the pathway amino-acid biosynthesis; L-histidine biosynthesis; L-histidine from 5-phospho-alpha-D-ribose 1-diphosphate: step 4/9. The polypeptide is 1-(5-phosphoribosyl)-5-[(5-phosphoribosylamino)methylideneamino] imidazole-4-carboxamide isomerase (Bordetella avium (strain 197N)).